The sequence spans 459 residues: Glycosyl hydrolase family 109 protein 1 (459 aa).

The segment at residues 1-31 (MHNIHRRHFLKAAGAVTAGLVTANIALNANA) is a signal peptide (tat-type signal). Residues 64-65 (ER), Asp-86, 135-138 (WEWH), 155-156 (EV), and Asn-184 each bind NAD(+). Substrate is bound by residues Tyr-213, Arg-232, 244–247 (YPTH), and Tyr-326. Tyr-244 contacts NAD(+).

The protein belongs to the Gfo/Idh/MocA family. Glycosyl hydrolase 109 subfamily. It depends on NAD(+) as a cofactor. Post-translationally, predicted to be exported by the Tat system. The position of the signal peptide cleavage has not been experimentally proven.

Functionally, glycosidase. The sequence is that of Glycosyl hydrolase family 109 protein 1 from Shewanella sp. (strain MR-4).